We begin with the raw amino-acid sequence, 560 residues long: 2-succinyl-5-enolpyruvyl-6-hydroxy-3-cyclohexene-1-carboxylate synthase (560 aa).

The protein belongs to the TPP enzyme family. MenD subfamily. In terms of assembly, homodimer. Mg(2+) serves as cofactor. The cofactor is Mn(2+). Requires thiamine diphosphate as cofactor.

It carries out the reaction isochorismate + 2-oxoglutarate + H(+) = 5-enolpyruvoyl-6-hydroxy-2-succinyl-cyclohex-3-ene-1-carboxylate + CO2. The protein operates within quinol/quinone metabolism; 1,4-dihydroxy-2-naphthoate biosynthesis; 1,4-dihydroxy-2-naphthoate from chorismate: step 2/7. It participates in quinol/quinone metabolism; menaquinone biosynthesis. Catalyzes the thiamine diphosphate-dependent decarboxylation of 2-oxoglutarate and the subsequent addition of the resulting succinic semialdehyde-thiamine pyrophosphate anion to isochorismate to yield 2-succinyl-5-enolpyruvyl-6-hydroxy-3-cyclohexene-1-carboxylate (SEPHCHC). In Pectobacterium atrosepticum (strain SCRI 1043 / ATCC BAA-672) (Erwinia carotovora subsp. atroseptica), this protein is 2-succinyl-5-enolpyruvyl-6-hydroxy-3-cyclohexene-1-carboxylate synthase.